A 379-amino-acid chain; its full sequence is Endonuclease III homolog 1, chloroplastic (379 aa).

The N-terminal 54 residues, 1-54 (MILLVNGGAATSIHPNAARFYRIGTMSRQIHGAVSSSKHISLKTQHPLSDSNSE), are a transit peptide targeting the chloroplast. Residues 244-272 (KYDGDIPSSLDDLLSLPGIGPKMAHLILH) form the HhH domain. Catalysis depends on Lys265, which acts as the Nucleophile; for N-glycosylase activity. Cys340, Cys347, Cys350, and Cys356 together coordinate [4Fe-4S] cluster.

It belongs to the Nth/MutY family. It depends on [4Fe-4S] cluster as a cofactor. In terms of tissue distribution, expressed at low levels in roots, stems, leaves and flowers.

It is found in the plastid. The protein resides in the chloroplast stroma. It localises to the chloroplast nucleoid. The catalysed reaction is 2'-deoxyribonucleotide-(2'-deoxyribose 5'-phosphate)-2'-deoxyribonucleotide-DNA = a 3'-end 2'-deoxyribonucleotide-(2,3-dehydro-2,3-deoxyribose 5'-phosphate)-DNA + a 5'-end 5'-phospho-2'-deoxyribonucleoside-DNA + H(+). Its function is as follows. Bifunctional DNA N-glycosylase with associated apurinic/apyrimidinic (AP) lyase function that catalyzes the first step in base excision repair (BER), the primary repair pathway for the repair of oxidative DNA damage. The DNA N-glycosylase activity releases the damaged DNA base from DNA by cleaving the N-glycosidic bond, leaving an AP site. The AP lyase activity cleaves the phosphodiester bond 3' to the AP site by a beta-elimination. Primarily recognizes and repairs oxidative base damage of pyrimidines. The protein is Endonuclease III homolog 1, chloroplastic of Arabidopsis thaliana (Mouse-ear cress).